An 88-amino-acid polypeptide reads, in one-letter code: ATP synthase F(0) complex subunit f, mitochondrial (88 aa).

Position 2 is an N-acetylalanine (Ala2). Position 3 is a phosphoserine (Ser3). At Lys16 the chain carries N6-acetyllysine. A helical membrane pass occupies residues 62–79 (MVLAAYVVFNYCRSYKEL).

It belongs to the ATPase F chain family. As to quaternary structure, component of the ATP synthase complex composed at least of ATP5F1A/subunit alpha, ATP5F1B/subunit beta, ATP5MC1/subunit c (homooctomer), MT-ATP6/subunit a, MT-ATP8/subunit 8, ATP5ME/subunit e, ATP5MF/subunit f, ATP5MG/subunit g, ATP5MK/subunit k, ATP5MJ/subunit j, ATP5F1C/subunit gamma, ATP5F1D/subunit delta, ATP5F1E/subunit epsilon, ATP5PF/subunit F6, ATP5PB/subunit b, ATP5PD/subunit d, ATP5PO/subunit OSCP. ATP synthase complex consists of a soluble F(1) head domain (subunits alpha(3) and beta(3)) - the catalytic core - and a membrane F(0) domain - the membrane proton channel (subunits c, a, 8, e, f, g, k and j). These two domains are linked by a central stalk (subunits gamma, delta, and epsilon) rotating inside the F1 region and a stationary peripheral stalk (subunits F6, b, d, and OSCP).

The protein localises to the mitochondrion. It is found in the mitochondrion inner membrane. Subunit f, of the mitochondrial membrane ATP synthase complex (F(1)F(0) ATP synthase or Complex V) that produces ATP from ADP in the presence of a proton gradient across the membrane which is generated by electron transport complexes of the respiratory chain. ATP synthase complex consist of a soluble F(1) head domain - the catalytic core - and a membrane F(1) domain - the membrane proton channel. These two domains are linked by a central stalk rotating inside the F(1) region and a stationary peripheral stalk. During catalysis, ATP synthesis in the catalytic domain of F(1) is coupled via a rotary mechanism of the central stalk subunits to proton translocation. In vivo, can only synthesize ATP although its ATP hydrolase activity can be activated artificially in vitro. Part of the complex F(0) domain. This chain is ATP synthase F(0) complex subunit f, mitochondrial, found in Sus scrofa (Pig).